A 345-amino-acid polypeptide reads, in one-letter code: Fe(3+) ions import ATP-binding protein FbpC (345 aa).

In terms of domain architecture, ABC transporter spans 4 to 236 (LELHGIGKSY…PVDEPTASFL (233 aa)). 36 to 43 (GPSGSGKT) serves as a coordination point for ATP.

The protein belongs to the ABC transporter superfamily. Fe(3+) ion importer (TC 3.A.1.10) family. The complex is composed of two ATP-binding proteins (FbpC), two transmembrane proteins (FbpB) and a solute-binding protein (FbpA).

Its subcellular location is the cell inner membrane. It catalyses the reaction Fe(3+)(out) + ATP + H2O = Fe(3+)(in) + ADP + phosphate + H(+). In terms of biological role, part of the ABC transporter complex FbpABC involved in Fe(3+) ions import. Responsible for energy coupling to the transport system. The chain is Fe(3+) ions import ATP-binding protein FbpC from Serratia marcescens.